The sequence spans 71 residues: uncharacterized protein (71 aa).

A compositionally biased stretch (basic residues) spans 1 to 16; sequence MAKSQAKKKRGHRLRN. Disordered regions lie at residues 1–39 and 51–71; these read MAKSQAKKKRGHRLRNGGRDVLLSRGSTPSFSTHGRMTK and KNPYDHTAVDDKDFFVPQKAA. Polar residues predominate over residues 25 to 35; sequence RGSTPSFSTHG. Basic and acidic residues predominate over residues 51–64; sequence KNPYDHTAVDDKDF.

This is an uncharacterized protein from Bacillus subtilis (strain 168).